The chain runs to 430 residues: POU domain, class 2, transcription factor 3 (430 aa).

Disordered stretches follow at residues 1-40 (MVNL…NGLD), 60-81 (HRPC…SGDM), 129-180 (LLLP…EPTD), and 248-267 (DAES…YPTL). Composition is skewed to polar residues over residues 23–32 (ARSTFGQVES) and 67–78 (QGPTMMPGNQMS). Residues 129-139 (LLLPQTGPGLT) are compositionally biased toward low complexity. A POU-specific domain is found at 176-250 (DEPTDLEELE…LLEKWLNDAE (75 aa)). Positions 251 to 267 (SSPSDPSASTPSSYPTL) are enriched in low complexity. A DNA-binding region (homeobox) is located at residues 274-333 (KRKKRTSIETNIRLTLEKRFQDNPKPSSEEISMIAEQLSMEKEVVRVWFCNRRQKEKRIN). Low complexity-rich tracts occupy residues 355–364 (SLGSLSVPPV) and 374–390 (SSCS…PGSG). The segment at 355 to 413 (SLGSLSVPPVHSTMPGTVTSSCSPGNNSRPSSPGSGLHASSPTASQNNSKAAMNPSSAA) is disordered. Residues 392–413 (HASSPTASQNNSKAAMNPSSAA) show a composition bias toward polar residues.

This sequence belongs to the POU transcription factor family. Class-2 subfamily. Interacts (via the POU domain) with POU2AF1 and POU2AF2 in a DNA-dependent manner; this interaction recruits POU2AF2 to chromatin and increases POU2F3 transactivation activity. In terms of tissue distribution, expressed in epidermis and hair follicles.

It localises to the nucleus. Functionally, transcription factor that binds to the octamer motif (5'-ATTTGCAT-3') and regulates cell type-specific differentiation pathways. Involved in the regulation of keratinocytes differentiation. The POU2F3-POU2AF2/POU2AF3 complex drives the expression of tuft-cell-specific genes, a rare chemosensory cells that coordinate immune and neural functions within mucosal epithelial tissues. Inhibits transactivation by POU2F1. This is POU domain, class 2, transcription factor 3 (Pou2f3) from Rattus norvegicus (Rat).